A 485-amino-acid chain; its full sequence is Glutamyl-tRNA(Gln) amidotransferase subunit A (485 aa).

Residues Lys79 and Ser154 each act as charge relay system in the active site. Ser178 (acyl-ester intermediate) is an active-site residue.

This sequence belongs to the amidase family. GatA subfamily. Heterotrimer of A, B and C subunits.

It catalyses the reaction L-glutamyl-tRNA(Gln) + L-glutamine + ATP + H2O = L-glutaminyl-tRNA(Gln) + L-glutamate + ADP + phosphate + H(+). Its function is as follows. Allows the formation of correctly charged Gln-tRNA(Gln) through the transamidation of misacylated Glu-tRNA(Gln) in organisms which lack glutaminyl-tRNA synthetase. The reaction takes place in the presence of glutamine and ATP through an activated gamma-phospho-Glu-tRNA(Gln). This Staphylococcus aureus (strain MRSA252) protein is Glutamyl-tRNA(Gln) amidotransferase subunit A.